The chain runs to 293 residues: ATP synthase gamma chain (293 aa).

The protein belongs to the ATPase gamma chain family. In terms of assembly, F-type ATPases have 2 components, CF(1) - the catalytic core - and CF(0) - the membrane proton channel. CF(1) has five subunits: alpha(3), beta(3), gamma(1), delta(1), epsilon(1). CF(0) has three main subunits: a, b and c.

The protein resides in the cell inner membrane. In terms of biological role, produces ATP from ADP in the presence of a proton gradient across the membrane. The gamma chain is believed to be important in regulating ATPase activity and the flow of protons through the CF(0) complex. The polypeptide is ATP synthase gamma chain (Nitrosospira multiformis (strain ATCC 25196 / NCIMB 11849 / C 71)).